A 250-amino-acid polypeptide reads, in one-letter code: 2,3-bisphosphoglycerate-dependent phosphoglycerate mutase (250 aa).

Residues 10 to 17 (RHGESEWN), 23 to 24 (TG), Arg-62, 89 to 92 (ERHY), Lys-100, 116 to 117 (RR), and 185 to 186 (GN) each bind substrate. His-11 functions as the Tele-phosphohistidine intermediate in the catalytic mechanism. Glu-89 (proton donor/acceptor) is an active-site residue.

The protein belongs to the phosphoglycerate mutase family. BPG-dependent PGAM subfamily. In terms of assembly, homodimer.

The enzyme catalyses (2R)-2-phosphoglycerate = (2R)-3-phosphoglycerate. The protein operates within carbohydrate degradation; glycolysis; pyruvate from D-glyceraldehyde 3-phosphate: step 3/5. Catalyzes the interconversion of 2-phosphoglycerate and 3-phosphoglycerate. This is 2,3-bisphosphoglycerate-dependent phosphoglycerate mutase from Edwardsiella ictaluri (strain 93-146).